A 968-amino-acid chain; its full sequence is Polycystin-2 (968 aa).

Positions 1–11 (MVNSSRVQPQQ) are enriched in polar residues. 2 disordered regions span residues 1 to 28 (MVNS…DPGR) and 58 to 181 (RIRQ…LPLE). Residues 1-219 (MVNSSRVQPQ…STNREKYLKS (219 aa)) lie on the Cytoplasmic side of the membrane. Low complexity predominate over residues 62-83 (AAARDPPAGAAASPSPPLSSCS). Phosphoserine is present on residues serine 76 and serine 80. Residues 95-107 (EAEEEEEEVEGEE) show a composition bias toward acidic residues. The span at 123–139 (RRSAASSAVSSVGARSR) shows a compositional bias: low complexity. Arginine 137 carries the post-translational modification Omega-N-methylarginine. Residues 220-241 (VLRELVTYLLFLIVLCILTYGM) traverse the membrane as a helical segment. The Extracellular portion of the chain corresponds to 242–468 (MSSNVYYYTR…PLKLIRYVTT (227 aa)). 2 N-linked (GlcNAc...) asparagine glycosylation sites follow: asparagine 299 and asparagine 305. N-linked (GlcNAc...) (complex) asparagine glycosylation occurs at asparagine 328. A disulfide bridge links cysteine 331 with cysteine 344. N-linked (GlcNAc...) asparagine glycans are attached at residues asparagine 362 and asparagine 375. A helical transmembrane segment spans residues 469–489 (FDFFLAACEIIFCFFIFYYVV). The Cytoplasmic segment spans residues 490–505 (EEILEIRIHKLHYFRS). Residues 506 to 526 (FWNCLDVVIVVLSVVAIGINI) traverse the membrane as a helical segment. The Extracellular portion of the chain corresponds to 527–552 (YRTSNVEVLLQFLEDQNTFPNFEHLA). The chain crosses the membrane as a helical span at residues 553–573 (YWQIQFNNIAAVTVFFVWIKL). Glutamine 557 serves as a coordination point for cholesterol. Residues 574-597 (FKFINFNRTMSQLSTTMSRCAKDL) are Cytoplasmic-facing. A helical membrane pass occupies residues 598–619 (FGFAIMFFIIFLAYAQLAYLVF). The Extracellular portion of the chain corresponds to 620-631 (GTQVDDFSTFQE). An intramembrane region (pore-forming) is located at residues 632–646 (CIFTQFRIILGDINF). Residue leucine 641 participates in Ca(2+) binding. The Selectivity filter motif lies at 641–643 (LGD). Topologically, residues 647–654 (AEIEEANR) are extracellular. The chain crosses the membrane as a helical span at residues 655 to 675 (VLGPIYFTTFVFFMFFILLNM). Topologically, residues 676–968 (FLAIINDTYS…GGNGSSNVHV (293 aa)) are cytoplasmic. Residues 750-785 (HTDAEIEAIFTKYDQDGDQELTEHEHQQMRDDLEKE) form the EF-hand domain. Aspartate 763, aspartate 765, aspartate 767, glutamate 769, and glutamate 774 together coordinate Ca(2+). Positions 764 to 831 (QDGDQELTEH…HSSRRRGSIS (68 aa)) are disordered. A compositionally biased stretch (basic and acidic residues) spans 770–795 (LTEHEHQQMRDDLEKEREDLDLDHSS). A compositionally biased stretch (low complexity) spans 796–807 (LPRPMSSRSFPR). 4 positions are modified to phosphoserine: serine 801, serine 808, serine 812, and serine 829. A linker region spans residues 803–822 (RSFPRSLDDSEEDDDEDSGH). The tract at residues 810–821 (DDSEEDDDEDSG) is important for interaction with PACS1 and PACS2. Residues 833 to 872 (GVSYEEFQVLVRRVDRMEHSIGSIVSKIDAVIVKLEIMER) adopt a coiled-coil conformation. The tract at residues 917–968 (ESDDAASQISHGLGTPVGLNGQPRPRSSRPSSSQSTEGMEGAGGNGSSNVHV) is disordered. Over residues 938-951 (QPRPRSSRPSSSQS) the composition is skewed to low complexity.

This sequence belongs to the polycystin family. Homotetramer. Component of the heterotetrameric polycystin channel complex with PKD1; the tetramer contains one PKD1 chain and three PKD2 chains. Isoform 1 interacts with PKD1 while isoform 3 does not. Interacts with PKD1L1; probably forms a Ca(2+) channel. Interacts with CD2AP. Interacts with HAX1. Interacts with NEK8. Part of a complex containing AKAP5, ADCY5, ADCY6 and PDE4C. Interacts (via C-terminus) with TRPV4 (via C-terminus). Interacts (via C-terminal acidic region) with PACS1 and PACS2; these interactions retain the protein in the endoplasmic reticulum and prevent trafficking to the cell membrane. Interacts with TMEM33. Form a heterotetramer with TRPC1 with a 2:2 stoichiometry; has distinct channel properties separate from PKD2 or TRPC1 homomers alone. Interacts with TMEM120A; TMEM120A inhibits PKD2 channel activity through the physical association of PKD2 with TMEM120A. Interacts (via N-terminus) with RYR2; regulates RYR2 channel activity. Phosphorylated. Phosphorylation is important for protein function; a mutant that lacks the N-terminal phosphorylation sites cannot complement a zebrafish pkd2-deficient mutant. PKD-mediated phosphorylation at the C-terminus regulates its function in the release of Ca(2+) stores from the endoplasmic reticulum. Phosphorylation at Ser-812 regulates PKD2 trafficking. Phosphorylation at Ser-76 is required for PKD2 trafficking to or retention at the lateral plasma membrane. Phosphorylation at Ser-801, Ser-812 and Ser-829 regulates PKD2 channel activity. In terms of processing, N-glycosylated. The four subunits in a tetramer probably differ in the extent of glycosylation; simultaneous glycosylation of all experimentally validated sites would probably create steric hindrance. Thus, glycosylation at Asn-305 is not compatible with glycosylation at Asn-328; only one of these two residues is glycosylated at a given time. Post-translationally, sumoylated by SUMO1; sumoylation regulates PKD2 membrane recycling and is necessary for intravascular pressure-induced arterial contractility. As to expression, detected in fetal and adult kidney. Detected at the thick ascending limb of the loop of Henle, at distal tubules, including the distal convoluted tubule and cortical collecting tubules, with weak staining of the collecting duct. Detected on placenta syncytiotrophoblasts (at protein level). Strongly expressed in ovary, fetal and adult kidney, testis, and small intestine. Not detected in peripheral leukocytes.

The protein localises to the cell projection. Its subcellular location is the cilium membrane. It is found in the endoplasmic reticulum membrane. It localises to the cell membrane. The protein resides in the basolateral cell membrane. The protein localises to the cytoplasmic vesicle membrane. Its subcellular location is the golgi apparatus. It is found in the vesicle. It localises to the secreted. The protein resides in the extracellular exosome. The enzyme catalyses K(+)(in) = K(+)(out). It catalyses the reaction Na(+)(in) = Na(+)(out). The catalysed reaction is Ca(2+)(in) = Ca(2+)(out). With respect to regulation, channel activity is regulated by phosphorylation. Channel activity is regulated by intracellular Ca(2+). At the endoplasmic reticulum membrane (ER), TMEM33 enhances its channel activity. TMEM120A inhibits the channel activity of PKD2, and mediates mechanosensitivity of the PKD2-TMEM120A channel complex. PKD1/PKD2 complex on the plasma membrane is activated by PKD1 N-terminus. Forms a nonselective cation channel. Can function as a homotetrameric ion channel or can form heteromer with PKD1. Displays distinct function depending on its subcellular localization and regulation by its binding partners. In primary cilium functions as a cation channel, with a preference for monovalent cations over divalent cations that allows K(+), Na(+) and Ca(2+) influx, with low selectivity for Ca(2+). Involved in fluid-flow mechanosensation by the primary cilium in renal epithelium. In the endoplasmic reticulum, likely functions as a K(+) channel to facilitate Ca(2+) release. The heterotetrameric PKD1/PKD2 channel has higher Ca(2+) permeability than homomeric PKD2 channel and acts as a primarily Ca(2+)-permeable channel. Interacts with and acts as a regulator of a number of other channels, such as TRPV4, TRPC1, IP3R, RYR2, ultimately further affecting intracellular signaling, to modulate intracellular Ca(2+) signaling. Together with TRPV4, forms mechano- and thermosensitive channels in cilium. In cardiomyocytes, PKD2 modulates Ca(2+) release from stimulated RYR2 receptors through direct association. Also involved in left-right axis specification via its role in sensing nodal flow; forms a complex with PKD1L1 in cilia to facilitate flow detection in left-right patterning. Acts as a regulator of cilium length together with PKD1. Mediates systemic blood pressure and contributes to the myogenic response in cerebral arteries though vasoconstriction. This chain is Polycystin-2, found in Homo sapiens (Human).